The sequence spans 663 residues: DNA topoisomerase 4 subunit B (663 aa).

ATP is bound by residues Tyr-21, Asn-61, Asp-88, 130-136, and Lys-360; that span reads GLHGVGI. Residues 440 to 554 form the Toprim domain; it reads TELFIVEGDS…EGHLYLAKPP (115 aa). The Mg(2+) site is built by Glu-446, Asp-519, and Asp-521.

This sequence belongs to the type II topoisomerase family. ParE type 1 subfamily. Heterotetramer composed of ParC and ParE. Mg(2+) is required as a cofactor. It depends on Mn(2+) as a cofactor. Requires Ca(2+) as cofactor.

The catalysed reaction is ATP-dependent breakage, passage and rejoining of double-stranded DNA.. Functionally, topoisomerase IV is essential for chromosome segregation. It relaxes supercoiled DNA. Performs the decatenation events required during the replication of a circular DNA molecule. This Rickettsia typhi (strain ATCC VR-144 / Wilmington) protein is DNA topoisomerase 4 subunit B.